Reading from the N-terminus, the 458-residue chain is Bifunctional protein HldE (458 aa).

Residues 1 to 311 are ribokinase; sequence MVNVLVVGDL…ENLKSKKSGF (311 aa). Residue 189-192 participates in ATP binding; that stretch reads NKKE. D257 is a catalytic residue. The tract at residues 333 to 458 is cytidylyltransferase; the sequence is FTNGCFDILH…TTNIINKIKG (126 aa).

It in the N-terminal section; belongs to the carbohydrate kinase PfkB family. The protein in the C-terminal section; belongs to the cytidylyltransferase family. Homodimer.

It catalyses the reaction D-glycero-beta-D-manno-heptose 7-phosphate + ATP = D-glycero-beta-D-manno-heptose 1,7-bisphosphate + ADP + H(+). The catalysed reaction is D-glycero-beta-D-manno-heptose 1-phosphate + ATP + H(+) = ADP-D-glycero-beta-D-manno-heptose + diphosphate. It participates in nucleotide-sugar biosynthesis; ADP-L-glycero-beta-D-manno-heptose biosynthesis; ADP-L-glycero-beta-D-manno-heptose from D-glycero-beta-D-manno-heptose 7-phosphate: step 1/4. Its pathway is nucleotide-sugar biosynthesis; ADP-L-glycero-beta-D-manno-heptose biosynthesis; ADP-L-glycero-beta-D-manno-heptose from D-glycero-beta-D-manno-heptose 7-phosphate: step 3/4. Functionally, catalyzes the phosphorylation of D-glycero-D-manno-heptose 7-phosphate at the C-1 position to selectively form D-glycero-beta-D-manno-heptose-1,7-bisphosphate. Its function is as follows. Catalyzes the ADP transfer from ATP to D-glycero-beta-D-manno-heptose 1-phosphate, yielding ADP-D-glycero-beta-D-manno-heptose. The polypeptide is Bifunctional protein HldE (Campylobacter fetus subsp. fetus (strain 82-40)).